We begin with the raw amino-acid sequence, 120 residues long: uncharacterized protein (120 aa).

Residues 45–78 (QLISESLKIAQKDLMEVRKELRKRKIAIRETERD) adopt a coiled-coil conformation.

This is an uncharacterized protein from Bacillus subtilis (strain 168).